Consider the following 69-residue polypeptide: U2-agatoxin-Ao1e (69 aa).

The N-terminal stretch at 1-20 is a signal peptide; sequence MRAIISVLLISAMVFSIIEA. The propeptide occupies 21–34; that stretch reads VPLEEGLQLFEAER. Intrachain disulfides connect Cys-37–Cys-53, Cys-44–Cys-58, and Cys-52–Cys-68.

The protein belongs to the neurotoxin 01 (U2-agtx) family. In terms of tissue distribution, expressed by the venom gland.

The protein resides in the secreted. In terms of biological role, insect active toxin causing rapid but reversible paralysis in crickets. No activity shown in mammals. Does not show effect on mammalian voltage-gated calcium channels. The protein is U2-agatoxin-Ao1e of Agelena orientalis (Funnel-web spider).